The primary structure comprises 195 residues: Pyridoxal 5'-phosphate synthase subunit PdxT (195 aa).

Residue 46–48 (GES) participates in L-glutamine binding. The active-site Nucleophile is the Cys-78. Residues Arg-105 and 133–134 (IR) each bind L-glutamine. Residues His-169 and Glu-171 each act as charge relay system in the active site.

It belongs to the glutaminase PdxT/SNO family. As to quaternary structure, in the presence of PdxS, forms a dodecamer of heterodimers. Only shows activity in the heterodimer.

The catalysed reaction is aldehydo-D-ribose 5-phosphate + D-glyceraldehyde 3-phosphate + L-glutamine = pyridoxal 5'-phosphate + L-glutamate + phosphate + 3 H2O + H(+). The enzyme catalyses L-glutamine + H2O = L-glutamate + NH4(+). It functions in the pathway cofactor biosynthesis; pyridoxal 5'-phosphate biosynthesis. Catalyzes the hydrolysis of glutamine to glutamate and ammonia as part of the biosynthesis of pyridoxal 5'-phosphate. The resulting ammonia molecule is channeled to the active site of PdxS. This is Pyridoxal 5'-phosphate synthase subunit PdxT from Shouchella clausii (strain KSM-K16) (Alkalihalobacillus clausii).